The chain runs to 434 residues: Beta-enolase (434 aa).

A2 carries the N-acetylalanine modification. A Phosphothreonine modification is found at T72. S83 and S157 each carry phosphoserine. Substrate-binding residues include H158 and E167. S176 is modified (phosphoserine). Phosphothreonine is present on T205. E210 serves as the catalytic Proton donor. A Phosphothreonine modification is found at T229. Y236 bears the Phosphotyrosine mark. Position 245 (D245) interacts with Mg(2+). The residue at position 263 (S263) is a Phosphoserine. Positions 293 and 318 each coordinate substrate. 2 residues coordinate Mg(2+): E293 and D318. K343 acts as the Proton acceptor in catalysis. Substrate contacts are provided by residues 370–373 and K394; that span reads SHRS.

It belongs to the enolase family. As to quaternary structure, mammalian enolase is composed of 3 isozyme subunits, alpha, beta and gamma, which can form homodimers or heterodimers which are cell-type and development-specific. Interacts with PNKD. Mg(2+) serves as cofactor.

The protein resides in the cytoplasm. The enzyme catalyses (2R)-2-phosphoglycerate = phosphoenolpyruvate + H2O. Its pathway is carbohydrate degradation; glycolysis; pyruvate from D-glyceraldehyde 3-phosphate: step 4/5. Glycolytic enzyme that catalyzes the conversion of 2-phosphoglycerate to phosphoenolpyruvate. Appears to have a function in striated muscle development and regeneration. In Bos taurus (Bovine), this protein is Beta-enolase (ENO3).